The primary structure comprises 175 residues: Shikimate kinase (175 aa).

Residue glycine 10 to threonine 15 coordinates ATP. Threonine 14 serves as a coordination point for Mg(2+). Substrate-binding residues include aspartate 32, arginine 56, and glycine 78. Arginine 116 lines the ATP pocket. Arginine 135 is a substrate binding site.

The protein belongs to the shikimate kinase family. In terms of assembly, monomer. Mg(2+) is required as a cofactor.

The protein resides in the cytoplasm. The catalysed reaction is shikimate + ATP = 3-phosphoshikimate + ADP + H(+). The protein operates within metabolic intermediate biosynthesis; chorismate biosynthesis; chorismate from D-erythrose 4-phosphate and phosphoenolpyruvate: step 5/7. Catalyzes the specific phosphorylation of the 3-hydroxyl group of shikimic acid using ATP as a cosubstrate. The chain is Shikimate kinase from Aromatoleum aromaticum (strain DSM 19018 / LMG 30748 / EbN1) (Azoarcus sp. (strain EbN1)).